Here is a 68-residue protein sequence, read N- to C-terminus: Protein transport protein Sec61 subunit gamma (68 aa).

Methionine 1 carries the post-translational modification N-acetylmethionine. Over methionine 1–glutamate 32 the chain is Cytoplasmic. Residue serine 18 is modified to Phosphoserine. Residues phenylalanine 33–isoleucine 61 form a helical membrane-spanning segment. Topologically, residues asparagine 62–glycine 68 are extracellular.

Belongs to the SecE/SEC61-gamma family. As to quaternary structure, the SEC61 channel-forming translocon complex consists of channel-forming core components SEC61A1, SEC61B and SEC61G and different auxiliary components such as SEC62 and SEC63. The SEC61 channel associates with the multi-pass translocon (MPT) complex.

The protein resides in the endoplasmic reticulum membrane. Component of SEC61 channel-forming translocon complex that mediates transport of signal peptide-containing precursor polypeptides across the endoplasmic reticulum (ER). Forms a ribosome receptor and a gated pore in the ER membrane, both functions required for cotranslational translocation of nascent polypeptides. The SEC61 channel is also involved in ER membrane insertion of transmembrane proteins: it mediates membrane insertion of the first few transmembrane segments of proteins, while insertion of subsequent transmembrane regions of multi-pass membrane proteins is mediated by the multi-pass translocon (MPT) complex. The SEC61 channel cooperates with the translocating protein TRAM1 to import nascent proteins into the ER. The polypeptide is Protein transport protein Sec61 subunit gamma (SEC61G) (Bos taurus (Bovine)).